We begin with the raw amino-acid sequence, 183 residues long: TATA box-binding protein-like 1 (183 aa).

The protein belongs to the TBP family. Binds TFIIA and TFIIB. Present in the brain, heart, liver and gizzard.

Its subcellular location is the cytoplasm. It localises to the nucleus. Functionally, part of a specialized transcription system that mediates the transcription of most ribosomal proteins through the 5'-TCT-3' motif which is a core promoter element at these genes. Seems to also mediate the transcription of NF1. Does not bind the TATA box. The chain is TATA box-binding protein-like 1 (TBPL1) from Gallus gallus (Chicken).